A 69-amino-acid polypeptide reads, in one-letter code: Putative antitoxin AF_1481 (69 aa).

The protein belongs to the UPF0330 family.

Functionally, possibly the antitoxin component of a type II toxin-antitoxin (TA) system. In Archaeoglobus fulgidus (strain ATCC 49558 / DSM 4304 / JCM 9628 / NBRC 100126 / VC-16), this protein is Putative antitoxin AF_1481.